The sequence spans 541 residues: MNAIVEQLKSTAAATKATDLRAAFAADAQRFSRFSVSLDDLLMDYSKTAVNDEILKLLVKLAEEGGVERKREEMFSGKAINFTEDRAVLHTALRNRSNTPVLVDGKDVMPDVNAVLAAMGKFADDIRSGALKGATGKAITDVINIGIGGSDLGPVMATLALAPFHDGPRAHFVSNIDGAHIADILKLVQPETTLFIVASKTFTTVETMTNAQTARSFIAKSLGEAAVQHHFAAVSTALDKVAAFGIDSARVFGFWDWVGGRYSIWSAIGLPLMIAIGPENFGKFLDGAHAVDNHFRQAPVTENLPMLLGLIGFYHRNVLGYPTRAILPYDQRLSRFPAYLQQLDMESNGKGVTIDGTPVDGNSGPVVWGEPGTNGQHAFYQLIHQGTSIIPAEFMIAANAFEPELRHQHQLLISNVLAQSEALMKGRTFAEAKKQLTDKGMDDKKADFIAPHRVFTGNRPSITFVYDKLTPYALGRLIALYEHRVFVEGVLFRINSFDQWGVELGKELATGLLPVVEGKESAASHDSSTQGLVAALAKLAK.

The active-site Proton donor is the glutamate 346. Residues histidine 377 and lysine 506 contribute to the active site.

It belongs to the GPI family.

It localises to the cytoplasm. The enzyme catalyses alpha-D-glucose 6-phosphate = beta-D-fructose 6-phosphate. It functions in the pathway carbohydrate biosynthesis; gluconeogenesis. The protein operates within carbohydrate degradation; glycolysis; D-glyceraldehyde 3-phosphate and glycerone phosphate from D-glucose: step 2/4. Catalyzes the reversible isomerization of glucose-6-phosphate to fructose-6-phosphate. This is Glucose-6-phosphate isomerase from Rhizobium etli (strain ATCC 51251 / DSM 11541 / JCM 21823 / NBRC 15573 / CFN 42).